We begin with the raw amino-acid sequence, 437 residues long: Phosphomethylpyrimidine synthase (437 aa).

Substrate is bound by residues Asn-69, Met-98, Tyr-127, His-163, 185–187, 226–229, and Glu-265; these read SRG and DACR. Position 269 (His-269) interacts with Zn(2+). Tyr-292 contacts substrate. His-333 is a binding site for Zn(2+). Positions 409, 412, and 416 each coordinate [4Fe-4S] cluster.

This sequence belongs to the ThiC family. Requires [4Fe-4S] cluster as cofactor.

It carries out the reaction 5-amino-1-(5-phospho-beta-D-ribosyl)imidazole + S-adenosyl-L-methionine = 4-amino-2-methyl-5-(phosphooxymethyl)pyrimidine + CO + 5'-deoxyadenosine + formate + L-methionine + 3 H(+). Its pathway is cofactor biosynthesis; thiamine diphosphate biosynthesis. Its function is as follows. Catalyzes the synthesis of the hydroxymethylpyrimidine phosphate (HMP-P) moiety of thiamine from aminoimidazole ribotide (AIR) in a radical S-adenosyl-L-methionine (SAM)-dependent reaction. This Clostridium novyi (strain NT) protein is Phosphomethylpyrimidine synthase.